Reading from the N-terminus, the 739-residue chain is MLKKIVTALGMSGMLLAANSAIADDKNTEMATPQSVDLSPLRNLNKLDSPMGKNYDYHQSFKKLNTEELKKDMQDLLTQSQDWWPADFGNYGPFFIRLSWHDAGTYRLADGRGGANRGQQRFSPLNSWPDNVNLDKARQLLWPIKQKYGDAVSWSDLIVLAGTVSLESMGMKPIGFAFGREDDWQGDDTNWGISPEQLMSSNVKDGKLAPAYAATQMGLIYVNPEGPDGKPDIKGAASEIRQAFRAMGMTDKETVALIAGGHTFGKTHGAVPEKDIKKDIGPAPDKAPIEQQGLGWHNSYGTGMGDDTMGSGLEGSWTSTPTFWNHDFLHNLYNLNWEKTLSPSGAHQWTPTNAKPENMVPDAHKPGVKHKPIMFTTDLALKEDDGFNKYTQEFYNNPQEFKEEFAKAWFKLTHRDMGPKSRYIGPWIPEQNFIWQDPVPVADYKQVSAQDIAQLKQDIINSGLTNQQLIRTAWDSASTYRKTDYRGGSNGARIALAPEKDWQMNEPAKLEVVLAKLKEIQTNFNNNKTDGTKVSLADLIVLGGNVGVEQAAKEAGYTIEIPFVPGRTDATQAQTDIESFNYLKTKADGFVNYSDGSLASNKLPQALVEKASMLNLNIPEMTVLVGGMRALNVNYDDSQEGVFTKTPGQLNNNFFVNLLDMSTKWEKSDTNSGEYIGIDRKTGAQKWTATSVDLIFGSNSELKAVAQVYAENGNEQKFVNDFAKAWHKVMMLGRFDVQE.

The first 23 residues, methionine 1–alanine 23, serve as a signal peptide directing secretion. A cross-link (tryptophyl-tyrosyl-methioninium (Trp-Tyr) (with M-247)) is located at residues tryptophan 100–tyrosine 221. Catalysis depends on histidine 101, which acts as the Proton acceptor. A cross-link (tryptophyl-tyrosyl-methioninium (Tyr-Met) (with W-100)) is located at residues tyrosine 221 to methionine 247. Histidine 262 lines the heme b pocket.

It belongs to the peroxidase family. Peroxidase/catalase subfamily. As to quaternary structure, homodimer or homotetramer. Heme b is required as a cofactor. In terms of processing, formation of the three residue Trp-Tyr-Met cross-link is important for the catalase, but not the peroxidase activity of the enzyme.

The enzyme catalyses H2O2 + AH2 = A + 2 H2O. It carries out the reaction 2 H2O2 = O2 + 2 H2O. Its function is as follows. Bifunctional enzyme with both catalase and broad-spectrum peroxidase activity. The polypeptide is Catalase-peroxidase (Francisella philomiragia subsp. philomiragia (strain ATCC 25017 / CCUG 19701 / FSC 153 / O#319-036)).